We begin with the raw amino-acid sequence, 300 residues long: Acetylglutamate kinase (300 aa).

Substrate-binding positions include 68–69 (GG), arginine 90, and asparagine 195.

Belongs to the acetylglutamate kinase family. ArgB subfamily.

The protein resides in the cytoplasm. The enzyme catalyses N-acetyl-L-glutamate + ATP = N-acetyl-L-glutamyl 5-phosphate + ADP. It participates in amino-acid biosynthesis; L-arginine biosynthesis; N(2)-acetyl-L-ornithine from L-glutamate: step 2/4. In terms of biological role, catalyzes the ATP-dependent phosphorylation of N-acetyl-L-glutamate. The sequence is that of Acetylglutamate kinase from Azotobacter vinelandii (strain DJ / ATCC BAA-1303).